The sequence spans 178 residues: Interleukin-10 (178 aa).

Residues 1–18 (MHSSALLCCLVFLTGVRA) form the signal peptide. Disulfide bonds link Cys-30/Cys-126 and Cys-80/Cys-132. Asn-134 carries N-linked (GlcNAc...) asparagine glycosylation.

It belongs to the IL-10 family. As to quaternary structure, homodimer. Interacts with IL10RA and IL10RB.

It is found in the secreted. In terms of biological role, major immune regulatory cytokine that acts on many cells of the immune system where it has profound anti-inflammatory functions, limiting excessive tissue disruption caused by inflammation. Mechanistically, IL10 binds to its heterotetrameric receptor comprising IL10RA and IL10RB leading to JAK1 and STAT2-mediated phosphorylation of STAT3. In turn, STAT3 translocates to the nucleus where it drives expression of anti-inflammatory mediators. Targets antigen-presenting cells (APCs) such as macrophages and monocytes and inhibits their release of pro-inflammatory cytokines including granulocyte-macrophage colony-stimulating factor /GM-CSF, granulocyte colony-stimulating factor/G-CSF, IL-1 alpha, IL-1 beta, IL-6, IL-8 and TNF-alpha. Also interferes with antigen presentation by reducing the expression of MHC-class II and co-stimulatory molecules, thereby inhibiting their ability to induce T cell activation. In addition, controls the inflammatory response of macrophages by reprogramming essential metabolic pathways including mTOR signaling. The chain is Interleukin-10 (IL10) from Saimiri sciureus (Common squirrel monkey).